A 90-amino-acid chain; its full sequence is Small ribosomal subunit protein bS16 (90 aa).

Belongs to the bacterial ribosomal protein bS16 family.

The polypeptide is Small ribosomal subunit protein bS16 (Bacillus cytotoxicus (strain DSM 22905 / CIP 110041 / 391-98 / NVH 391-98)).